The following is a 51-amino-acid chain: Cyclic phosphodiesterase (51 aa).

His11 serves as the catalytic Proton donor/acceptor. Thr13 provides a ligand contact to substrate. Residue His38 is the Proton donor/acceptor of the active site. 2 residues coordinate substrate: Ser40 and Tyr43.

Belongs to the 2H phosphoesterase superfamily. CPD1 family.

Hydrolyzes ADP-ribose 1'',2''-cyclic phosphate (Appr&gt;1) that is produced during tRNA splicing into ADP-ribose 1''-phosphate (Appr-1''p). The chain is Cyclic phosphodiesterase from Triticum aestivum (Wheat).